Here is a 426-residue protein sequence, read N- to C-terminus: Trophoblast glycoprotein (426 aa).

Residues 1–31 form the signal peptide; it reads MPGAGSRGPSAGDGRLRLARLALVLLGWVSA. The Extracellular portion of the chain corresponds to 32-361; sequence SAPSSSLPSS…ATLPQSLQTS (330 aa). Residues 34–51 are compositionally biased toward low complexity; the sequence is PSSSLPSSSTSPAAFLAS. Residues 34–54 are disordered; sequence PSSSLPSSSTSPAAFLASGSA. One can recognise an LRRNT domain in the interval 53–91; that stretch reads SAQPPPAERCPAACECSEAARTVKCVNRNLLEVPADLPP. Disulfide bonds link Cys-62-Cys-68 and Cys-66-Cys-77. 3 LRR repeats span residues 92-113, 116-139, and 141-163; these read YVRN…AFAR, PLAD…GAFE, and LPGL…FTFA. Residue Asn-124 is glycosylated (N-linked (GlcNAc...) asparagine). N-linked (GlcNAc...) asparagine glycosylation occurs at Asn-166. 4 LRR repeats span residues 172-210, 215-238, 239-261, and 262-281; these read PSPL…AALR, LRGL…LLDQ, LPSL…ASFR, and NLTH…VLHN. Asn-281 carries N-linked (GlcNAc...) asparagine glycosylation. Residues 289–352 enclose the LRRCT domain; the sequence is GLAHVRVFLD…LTSSDLDCDA (64 aa). 2 disulfides stabilise this stretch: Cys-304-Cys-329 and Cys-306-Cys-350. Residues 362 to 382 traverse the membrane as a helical segment; sequence YVFLGIVLALIGAIFLLVLYL. Residues 383-426 lie on the Cytoplasmic side of the membrane; the sequence is NRKGIKKWMHNIRDACRDHMEGYHYRYEINADPRLTNLSSNSDV. Ser-424 carries the phosphoserine modification.

Highly glycosylated.

It localises to the cell membrane. Its function is as follows. May function as an inhibitor of Wnt/beta-catenin signaling by indirectly interacting with LRP6 and blocking Wnt3a-dependent LRP6 internalization. The protein is Trophoblast glycoprotein (Tpbg) of Rattus norvegicus (Rat).